We begin with the raw amino-acid sequence, 85 residues long: ATP synthase subunit c (85 aa).

The next 2 helical transmembrane spans lie at 10–30 and 53–73; these read IAVGIIVGLASLGTAIGFALL and FIIAGLLDAVPMIGIVIALLF.

The protein belongs to the ATPase C chain family. In terms of assembly, F-type ATPases have 2 components, F(1) - the catalytic core - and F(0) - the membrane proton channel. F(1) has five subunits: alpha(3), beta(3), gamma(1), delta(1), epsilon(1). F(0) has three main subunits: a(1), b(2) and c(10-14). The alpha and beta chains form an alternating ring which encloses part of the gamma chain. F(1) is attached to F(0) by a central stalk formed by the gamma and epsilon chains, while a peripheral stalk is formed by the delta and b chains.

It localises to the cell inner membrane. Functionally, f(1)F(0) ATP synthase produces ATP from ADP in the presence of a proton or sodium gradient. F-type ATPases consist of two structural domains, F(1) containing the extramembraneous catalytic core and F(0) containing the membrane proton channel, linked together by a central stalk and a peripheral stalk. During catalysis, ATP synthesis in the catalytic domain of F(1) is coupled via a rotary mechanism of the central stalk subunits to proton translocation. Its function is as follows. Key component of the F(0) channel; it plays a direct role in translocation across the membrane. A homomeric c-ring of between 10-14 subunits forms the central stalk rotor element with the F(1) delta and epsilon subunits. The sequence is that of ATP synthase subunit c from Aliivibrio fischeri (strain ATCC 700601 / ES114) (Vibrio fischeri).